The following is a 426-amino-acid chain: 3-phosphoshikimate 1-carboxyvinyltransferase (426 aa).

Positions 22, 23, and 27 each coordinate 3-phosphoshikimate. Residue lysine 22 coordinates phosphoenolpyruvate. Phosphoenolpyruvate-binding residues include glycine 96 and arginine 124. Serine 170, serine 171, glutamine 172, serine 198, aspartate 314, asparagine 337, and lysine 341 together coordinate 3-phosphoshikimate. Residue glutamine 172 participates in phosphoenolpyruvate binding. The Proton acceptor role is filled by aspartate 314. The phosphoenolpyruvate site is built by arginine 345, arginine 387, and lysine 412.

Belongs to the EPSP synthase family. In terms of assembly, monomer.

Its subcellular location is the cytoplasm. It catalyses the reaction 3-phosphoshikimate + phosphoenolpyruvate = 5-O-(1-carboxyvinyl)-3-phosphoshikimate + phosphate. It functions in the pathway metabolic intermediate biosynthesis; chorismate biosynthesis; chorismate from D-erythrose 4-phosphate and phosphoenolpyruvate: step 6/7. Catalyzes the transfer of the enolpyruvyl moiety of phosphoenolpyruvate (PEP) to the 5-hydroxyl of shikimate-3-phosphate (S3P) to produce enolpyruvyl shikimate-3-phosphate and inorganic phosphate. This is 3-phosphoshikimate 1-carboxyvinyltransferase from Shewanella sediminis (strain HAW-EB3).